The primary structure comprises 174 residues: Probable adenylyl-sulfate kinase (174 aa).

G10–T17 is an ATP binding site. S84 acts as the Phosphoserine intermediate in catalysis.

The protein belongs to the APS kinase family.

The enzyme catalyses adenosine 5'-phosphosulfate + ATP = 3'-phosphoadenylyl sulfate + ADP + H(+). It functions in the pathway sulfur metabolism; hydrogen sulfide biosynthesis; sulfite from sulfate: step 2/3. Catalyzes the synthesis of activated sulfate. In Pyrococcus abyssi (strain GE5 / Orsay), this protein is Probable adenylyl-sulfate kinase (cysC).